We begin with the raw amino-acid sequence, 380 residues long: Type 4 apparatus protein DotM (380 aa).

2 consecutive transmembrane segments (helical) span residues 18–38 and 99–119; these read MAPVWIVILLFITAYFVWALA and YPVICILVVLAFVLYNSNVTL.

As to quaternary structure, the T4BSS is a complex nanomachine composed of several subcomplexes. This subunit is part of the Type IV Coupling Complex (T4CC), a subcomplex composed of the DotLMNYZ core and the IcmSW-LvgA adapter subunits, linked by the C-terminal tail of DotL. Six DotLMNYZ hetero-pentameric units may assemble into a hexameric nanomachine, forming an inner membrane channel for effectors to pass through. Interacts directly with DotL.

Its subcellular location is the cell inner membrane. Component of the Dot/Icm type IVB secretion system (T4BSS), which is used to inject bacterial effector proteins into eukaryotic host cells. Part of a subcomplex which recruits effector proteins and delivers them to the core transmembrane subcomplex. Forms the interacting surface for recruitment of acidic Glu-rich motif-containing effectors. This chain is Type 4 apparatus protein DotM, found in Legionella pneumophila subsp. pneumophila (strain Philadelphia 1 / ATCC 33152 / DSM 7513).